The chain runs to 169 residues: Large ribosomal subunit protein uL10 (169 aa).

Belongs to the universal ribosomal protein uL10 family. As to quaternary structure, part of the ribosomal stalk of the 50S ribosomal subunit. The N-terminus interacts with L11 and the large rRNA to form the base of the stalk. The C-terminus forms an elongated spine to which L12 dimers bind in a sequential fashion forming a multimeric L10(L12)X complex.

Forms part of the ribosomal stalk, playing a central role in the interaction of the ribosome with GTP-bound translation factors. In Orientia tsutsugamushi (strain Ikeda) (Rickettsia tsutsugamushi), this protein is Large ribosomal subunit protein uL10.